We begin with the raw amino-acid sequence, 324 residues long: Beta-ketoacyl-[acyl-carrier-protein] synthase III (324 aa).

Residues Cys112 and His249 contribute to the active site. Positions 250 to 254 (QANRR) are ACP-binding. The active site involves Asn279.

The protein belongs to the thiolase-like superfamily. FabH family. As to quaternary structure, homodimer.

The protein localises to the cytoplasm. The catalysed reaction is malonyl-[ACP] + acetyl-CoA + H(+) = 3-oxobutanoyl-[ACP] + CO2 + CoA. The protein operates within lipid metabolism; fatty acid biosynthesis. Catalyzes the condensation reaction of fatty acid synthesis by the addition to an acyl acceptor of two carbons from malonyl-ACP. Catalyzes the first condensation reaction which initiates fatty acid synthesis and may therefore play a role in governing the total rate of fatty acid production. Possesses both acetoacetyl-ACP synthase and acetyl transacylase activities. Its substrate specificity determines the biosynthesis of branched-chain and/or straight-chain of fatty acids. The sequence is that of Beta-ketoacyl-[acyl-carrier-protein] synthase III from Streptococcus pyogenes serotype M4 (strain MGAS10750).